The chain runs to 111 residues: MEVQAKLKFARISAQKCRLVADQIRGLPVEQAINLLTFSNKKAAVLIKGVLNSAVANAEHNDGMDVDSLVVSTIFVDEGPTMKRFEARAKGRGNRILKRTSHITVKVAEKK.

The protein belongs to the universal ribosomal protein uL22 family. Part of the 50S ribosomal subunit.

Functionally, this protein binds specifically to 23S rRNA; its binding is stimulated by other ribosomal proteins, e.g. L4, L17, and L20. It is important during the early stages of 50S assembly. It makes multiple contacts with different domains of the 23S rRNA in the assembled 50S subunit and ribosome. Its function is as follows. The globular domain of the protein is located near the polypeptide exit tunnel on the outside of the subunit, while an extended beta-hairpin is found that lines the wall of the exit tunnel in the center of the 70S ribosome. In Francisella tularensis subsp. tularensis (strain FSC 198), this protein is Large ribosomal subunit protein uL22.